Consider the following 413-residue polypeptide: Divalent metal cation transporter MntH (413 aa).

The Cytoplasmic portion of the chain corresponds to methionine 1–leucine 19. Residues alanine 20–alanine 39 form a helical membrane-spanning segment. The Periplasmic segment spans residues threonine 40–glutamine 51. Residues leucine 52 to alanine 71 traverse the membrane as a helical segment. At lysine 72 to tryptophan 95 the chain is on the cytoplasmic side. A helical transmembrane segment spans residues phenylalanine 96–isoleucine 118. At glycine 119 to glycine 125 the chain is on the periplasmic side. A helical transmembrane segment spans residues valine 126–leucine 145. The Cytoplasmic portion of the chain corresponds to glutamine 146 to lysine 155. A helical membrane pass occupies residues valine 156–serine 175. Over glutamine 176 to alanine 196 the chain is Periplasmic. A helical membrane pass occupies residues valine 197–threonine 220. At glutamine 221–aspartate 238 the chain is on the cytoplasmic side. The chain crosses the membrane as a helical span at residues valine 239 to alanine 258. At alanine 259–tyrosine 276 the chain is on the periplasmic side. The chain crosses the membrane as a helical span at residues leucine 277 to alanine 297. Residues alanine 298–arginine 327 are Cytoplasmic-facing. Residues arginine 328–aspartate 344 traverse the membrane as a helical segment. The Periplasmic segment spans residues proline 345–valine 350. Residues methionine 351–phenylalanine 370 form a helical membrane-spanning segment. Over threonine 371 to lysine 387 the chain is Cytoplasmic. Residues glutamine 388–valine 406 traverse the membrane as a helical segment. At glycine 407–serine 413 the chain is on the periplasmic side.

This sequence belongs to the NRAMP family.

It localises to the cell inner membrane. H(+)-stimulated, divalent metal cation uptake system. The chain is Divalent metal cation transporter MntH from Salmonella paratyphi C (strain RKS4594).